The following is a 528-amino-acid chain: Tyrosine--tRNA ligase, cytoplasmic (528 aa).

M1 carries the N-acetylmethionine modification. G2 is subject to N-acetylglycine; in Tyrosine--tRNA ligase, cytoplasmic, N-terminally processed. Position 39 (Y39) interacts with L-tyrosine. Y39 serves as a coordination point for trans-resveratrol. A 'HIGH' region motif is present at residues 44-52 (TTGKPHVAY). The L-tyrosine site is built by Y166, Q170, D173, and Q188. Residues Q170 and D173 each coordinate trans-resveratrol. K197 carries the N6-acetyllysine modification. The residue at position 205 (S205) is a Phosphoserine. K206 is subject to N6-acetyllysine. The 'KMSKS' region motif lies at 222–226 (KMSSS). A Nuclear localization signal motif is present at residues 242 to 247 (KKKLKK). Residues 339 to 363 (AAYPDPSKQKPPAKGPAKNSEPEEV) are disordered. The tRNA-binding domain occupies 364–468 (IPSRLDIRVG…AGSAPGERVF (105 aa)). The residue at position 386 (S386) is a Phosphoserine. N6-acetyllysine occurs at positions 474, 482, and 490.

The protein belongs to the class-I aminoacyl-tRNA synthetase family. In terms of assembly, homodimer. Interacts (when binding to resveratrol) with PARP1; interaction stimulates the poly-ADP-ribosyltransferase activity of PARP1.

It is found in the cytoplasm. It localises to the nucleus. The enzyme catalyses tRNA(Tyr) + L-tyrosine + ATP = L-tyrosyl-tRNA(Tyr) + AMP + diphosphate + H(+). With respect to regulation, resveratrol strongly inhibits the tyrosine--tRNA ligase activity. Tyrosine--tRNA ligase that catalyzes the attachment of tyrosine to tRNA(Tyr) in a two-step reaction: tyrosine is first activated by ATP to form Tyr-AMP and then transferred to the acceptor end of tRNA(Tyr). Also acts as a positive regulator of poly-ADP-ribosylation in the nucleus, independently of its tyrosine--tRNA ligase activity. Activity is switched upon resveratrol-binding: resveratrol strongly inhibits the tyrosine--tRNA ligase activity and promotes relocalization to the nucleus, where YARS1 specifically stimulates the poly-ADP-ribosyltransferase activity of PARP1. This Mus musculus (Mouse) protein is Tyrosine--tRNA ligase, cytoplasmic (Yars1).